A 122-amino-acid polypeptide reads, in one-letter code: Large ribosomal subunit protein uL14 (122 aa).

Belongs to the universal ribosomal protein uL14 family. Part of the 50S ribosomal subunit. Forms a cluster with proteins L3 and L19. In the 70S ribosome, L14 and L19 interact and together make contacts with the 16S rRNA in bridges B5 and B8.

Its function is as follows. Binds to 23S rRNA. Forms part of two intersubunit bridges in the 70S ribosome. The sequence is that of Large ribosomal subunit protein uL14 from Listeria monocytogenes serotype 4b (strain CLIP80459).